The primary structure comprises 353 residues: UDP-xylose transporter 2 (353 aa).

10 consecutive transmembrane segments (helical) span residues 7-27, 31-51, 75-95, 100-120, 132-152, 154-174, 194-214, 224-244, 250-270, and 280-300; these read FQLGTIGALSLSVVSSVSIVI, ALISTLGFTFATTLTSWHLLV, VLGFGVLNGISIGLLNLSLGF, FYQMTKLAIIPCTVVLETIFF, LVILLLGVGIATVTDLQLNML, SVLSLLAVITTCVAQIMTNTI, AITLFVTGPFLDGLLTNQNVF, FFIVLSCLISVSVNFSTFLVI, VTYQVLGHLKTCLVLAFGYLL, and ILGILVAVIGMVLYSYYCTLE. Residues 308–353 form a disordered region; the sequence is TSTQLPQMDENEKDPLVSAENGSGLISDNGVQKQDPVWNSNKDFQA. Polar residues predominate over residues 327-353; the sequence is ENGSGLISDNGVQKQDPVWNSNKDFQA. S334 is subject to Phosphoserine.

Belongs to the TPT transporter family. TPT (TC 2.A.7.9) subfamily. In terms of tissue distribution, ubiquitous.

Its subcellular location is the golgi apparatus membrane. Nucleotide-sugar transporter that transports UDP-xylose and UMP in a strict counter-exchange mode. This is UDP-xylose transporter 2 from Arabidopsis thaliana (Mouse-ear cress).